The sequence spans 179 residues: Translation initiation factor IF-3 (179 aa).

Belongs to the IF-3 family. Monomer.

It is found in the cytoplasm. IF-3 binds to the 30S ribosomal subunit and shifts the equilibrium between 70S ribosomes and their 50S and 30S subunits in favor of the free subunits, thus enhancing the availability of 30S subunits on which protein synthesis initiation begins. The chain is Translation initiation factor IF-3 from Lactococcus lactis subsp. lactis (strain IL1403) (Streptococcus lactis).